Here is a 127-residue protein sequence, read N- to C-terminus: Large ribosomal subunit protein bL19 (127 aa).

This sequence belongs to the bacterial ribosomal protein bL19 family.

In terms of biological role, this protein is located at the 30S-50S ribosomal subunit interface and may play a role in the structure and function of the aminoacyl-tRNA binding site. The chain is Large ribosomal subunit protein bL19 from Synechococcus sp. (strain JA-3-3Ab) (Cyanobacteria bacterium Yellowstone A-Prime).